A 359-amino-acid polypeptide reads, in one-letter code: HTH-type transcriptional regulator Rv3575c (359 aa).

The HTH lacI-type domain maps to 9–64 (ATLASLAAELKVSRTTVSNAFNRPDQLSADLRERVLATAKRLGYAGPDPVARSLRT). Positions 11 to 30 (LASLAAELKVSRTTVSNAFN) form a DNA-binding region, H-T-H motif.

Transcriptional regulator that negatively regulates transcription of the mce4 operon, which is involved in cholesterol transport and utilization. Acts by binding to the promoter region of the mce4 operon. It affects the utilization of host cholesterol as a carbon source, impacting the host's innate immune response. The polypeptide is HTH-type transcriptional regulator Rv3575c (Mycobacterium tuberculosis (strain ATCC 25618 / H37Rv)).